Reading from the N-terminus, the 143-residue chain is Small ribosomal subunit protein eS6 (143 aa).

Belongs to the eukaryotic ribosomal protein eS6 family.

This chain is Small ribosomal subunit protein eS6, found in Methanoregula boonei (strain DSM 21154 / JCM 14090 / 6A8).